Here is a 354-residue protein sequence, read N- to C-terminus: Phosphoribosylformylglycinamidine cyclo-ligase (354 aa).

Belongs to the AIR synthase family.

It is found in the cytoplasm. It carries out the reaction 2-formamido-N(1)-(5-O-phospho-beta-D-ribosyl)acetamidine + ATP = 5-amino-1-(5-phospho-beta-D-ribosyl)imidazole + ADP + phosphate + H(+). It participates in purine metabolism; IMP biosynthesis via de novo pathway; 5-amino-1-(5-phospho-D-ribosyl)imidazole from N(2)-formyl-N(1)-(5-phospho-D-ribosyl)glycinamide: step 2/2. The polypeptide is Phosphoribosylformylglycinamidine cyclo-ligase (Synechococcus sp. (strain JA-2-3B'a(2-13)) (Cyanobacteria bacterium Yellowstone B-Prime)).